The primary structure comprises 373 residues: Zinc finger CCCH domain-containing protein 15 homolog (373 aa).

The tract at residues 1–27 (MPPKQAQSKKTVEKEKKKKVEDKTFGL) is disordered. Over residues 10–25 (KTVEKEKKKKVEDKTF) the composition is skewed to basic and acidic residues. C3H1-type zinc fingers lie at residues 95–123 (DPKSIVCEYFKQGVTCPKGNRCKFAHDLA) and 167–205 (KPTAIICKFFLDAIESKKYGWFWECPNGGEKCAYQHCLP). The stretch at 252-326 (KEEKRLQKEK…ALANQINTSL (75 aa)) forms a coiled coil. The interval 325–373 (SLFTDGGVLPSDDDDDDDDDDDDDEDGDDEEEDDDEEEGEYEEEEASDE) is disordered. Over residues 335 to 373 (SDDDDDDDDDDDDDEDGDDEEEDDDEEEGEYEEEEASDE) the composition is skewed to acidic residues.

This sequence belongs to the ZC3H15/TMA46 family.

The chain is Zinc finger CCCH domain-containing protein 15 homolog from Dictyostelium discoideum (Social amoeba).